Consider the following 299-residue polypeptide: MYKFRSKDMSHVFTPIKLNLALHVVGQRADGYHLIESLVYFSLSGDYLHYEPCESDQFVLTGPFAKELISHPDNLVVRARDFMHKTFPEGAHPTFFRLVKTLPVASGIGGGSGDAAGVISILRQQWNLDCPFEKLAKMSLVLGADVPMCLFALEYHQPLLVKGIGQEIIQLKEACSLAIVLVNHGQEISTQAVFKALDKRHHPSLKIDPIALKSVDSLVEALQETRNDLFSPALKMAPQLTQVLSILDECGSLFSRMSGTGATCFGIFKNQQTAQQAALLIKSMHPNWFVKSIMTLGTI.

Lys17 is an active-site residue. 103-113 (PVASGIGGGSG) lines the ATP pocket. Asp145 is an active-site residue.

It belongs to the GHMP kinase family. IspE subfamily.

The catalysed reaction is 4-CDP-2-C-methyl-D-erythritol + ATP = 4-CDP-2-C-methyl-D-erythritol 2-phosphate + ADP + H(+). It functions in the pathway isoprenoid biosynthesis; isopentenyl diphosphate biosynthesis via DXP pathway; isopentenyl diphosphate from 1-deoxy-D-xylulose 5-phosphate: step 3/6. Functionally, catalyzes the phosphorylation of the position 2 hydroxy group of 4-diphosphocytidyl-2C-methyl-D-erythritol. The polypeptide is 4-diphosphocytidyl-2-C-methyl-D-erythritol kinase (Bartonella tribocorum (strain CIP 105476 / IBS 506)).